The following is a 277-amino-acid chain: Tryptophan synthase alpha chain (277 aa).

Residues Glu-42 and Glu-53 each act as proton acceptor in the active site.

It belongs to the TrpA family. In terms of assembly, tetramer of two alpha and two beta chains.

The catalysed reaction is (1S,2R)-1-C-(indol-3-yl)glycerol 3-phosphate + L-serine = D-glyceraldehyde 3-phosphate + L-tryptophan + H2O. It functions in the pathway amino-acid biosynthesis; L-tryptophan biosynthesis; L-tryptophan from chorismate: step 5/5. In terms of biological role, the alpha subunit is responsible for the aldol cleavage of indoleglycerol phosphate to indole and glyceraldehyde 3-phosphate. This is Tryptophan synthase alpha chain from Natronomonas pharaonis (strain ATCC 35678 / DSM 2160 / CIP 103997 / JCM 8858 / NBRC 14720 / NCIMB 2260 / Gabara) (Halobacterium pharaonis).